A 305-amino-acid polypeptide reads, in one-letter code: MPIQINKTVIFLMGPTASGKTNLAIKLSQQFKTRLISVDSALIYKGMNIGTAKPDKATLKKYPHYLINICSPESSYSVFDFIRDANKQIKTAFAKNELPILVGGTSFYFHVLEHGLSNLPESSTKSKEKFNQLLRNKGTIKLHQDLKKIDPQAANKIHPNDSQRIIRALEVFNLSGKTISELQGNKKPIIDYPIKKIILMPKRNELHTKIETRFLLMMKNGFLNEVQHLKQNPNLHQNLSSIRCVGYRQAWQYLNGKIDKTEMIEKIIIATRQLCKRQITWLKSEKYALVLNNSNLAKAVTFINS.

Residue 14-21 (GPTASGKT) coordinates ATP. 16-21 (TASGKT) contributes to the substrate binding site. Interaction with substrate tRNA regions lie at residues 39-42 (DSAL), 163-167 (QRIIR), and 243-248 (RCVGYR).

It belongs to the IPP transferase family. In terms of assembly, monomer. Requires Mg(2+) as cofactor.

It carries out the reaction adenosine(37) in tRNA + dimethylallyl diphosphate = N(6)-dimethylallyladenosine(37) in tRNA + diphosphate. Its function is as follows. Catalyzes the transfer of a dimethylallyl group onto the adenine at position 37 in tRNAs that read codons beginning with uridine, leading to the formation of N6-(dimethylallyl)adenosine (i(6)A). The chain is tRNA dimethylallyltransferase from Vesicomyosocius okutanii subsp. Calyptogena okutanii (strain HA).